Here is a 481-residue protein sequence, read N- to C-terminus: Histidine--tRNA ligase, cytoplasmic (481 aa).

The tract at residues 1–48 (MSEPVVDNVTNKVEKMEVKEKTSAPPKEKKEKKSNKVQLKTPKGTQDY) is disordered. The span at 12–31 (KVEKMEVKEKTSAPPKEKKE) shows a compositional bias: basic and acidic residues.

The protein belongs to the class-II aminoacyl-tRNA synthetase family.

It localises to the cytoplasm. It catalyses the reaction tRNA(His) + L-histidine + ATP = L-histidyl-tRNA(His) + AMP + diphosphate + H(+). The chain is Histidine--tRNA ligase, cytoplasmic (hisS) from Dictyostelium discoideum (Social amoeba).